Reading from the N-terminus, the 294-residue chain is Energy-coupling factor transporter ATP-binding protein EcfA1 (294 aa).

One can recognise an ABC transporter domain in the interval 27–260; it reads IEFENVYFAY…EERLLKMQLD (234 aa). 60–67 contributes to the ATP binding site; that stretch reads GHNGSGKS.

The protein belongs to the ABC transporter superfamily. Energy-coupling factor EcfA family. As to quaternary structure, forms a stable energy-coupling factor (ECF) transporter complex composed of 2 membrane-embedded substrate-binding proteins (S component), 2 ATP-binding proteins (A component) and 2 transmembrane proteins (T component).

Its subcellular location is the cell membrane. Functionally, ATP-binding (A) component of a common energy-coupling factor (ECF) ABC-transporter complex. Unlike classic ABC transporters this ECF transporter provides the energy necessary to transport a number of different substrates. The sequence is that of Energy-coupling factor transporter ATP-binding protein EcfA1 from Ureaplasma parvum serovar 3 (strain ATCC 700970).